Here is a 152-residue protein sequence, read N- to C-terminus: Transcriptional regulator MraZ (152 aa).

2 consecutive SpoVT-AbrB domains span residues 5 to 52 (ATMV…PLPE) and 81 to 124 (ASEC…DEQT).

The protein belongs to the MraZ family. In terms of assembly, forms oligomers.

It is found in the cytoplasm. It localises to the nucleoid. In terms of biological role, negatively regulates its own expression and that of the subsequent genes in the proximal part of the division and cell wall (dcw) gene cluster. Acts by binding directly to DNA. May also regulate the expression of genes outside the dcw cluster. This chain is Transcriptional regulator MraZ, found in Yersinia pseudotuberculosis serotype O:1b (strain IP 31758).